Consider the following 167-residue polypeptide: Protein-export protein SecB (167 aa).

It belongs to the SecB family. In terms of assembly, homotetramer, a dimer of dimers. One homotetramer interacts with 1 SecA dimer.

It is found in the cytoplasm. One of the proteins required for the normal export of preproteins out of the cell cytoplasm. It is a molecular chaperone that binds to a subset of precursor proteins, maintaining them in a translocation-competent state. It also specifically binds to its receptor SecA. The chain is Protein-export protein SecB from Wolbachia sp. subsp. Brugia malayi (strain TRS).